The primary structure comprises 239 residues: Ribosomal RNA small subunit methyltransferase G (239 aa).

S-adenosyl-L-methionine is bound by residues glycine 78, phenylalanine 83, 129-130 (AE), and arginine 148.

The protein belongs to the methyltransferase superfamily. RNA methyltransferase RsmG family.

It is found in the cytoplasm. In terms of biological role, specifically methylates the N7 position of a guanine in 16S rRNA. The polypeptide is Ribosomal RNA small subunit methyltransferase G (Clostridium botulinum (strain 657 / Type Ba4)).